An 82-amino-acid polypeptide reads, in one-letter code: MAFLLPFLCNCCNPMSLLCGGGCDLISCCCRGGGWQPMARQPIYPYGSPMGAHVYYPPPVAQPPVRGPVRVPQGERPVDGLR.

This is an uncharacterized protein from Ictalurid herpesvirus 1 (strain Auburn) (IcHV-1).